Consider the following 367-residue polypeptide: DNA replication and repair protein RecF (367 aa).

30–37 is an ATP binding site; the sequence is GENAQGKT.

Belongs to the RecF family.

Its subcellular location is the cytoplasm. In terms of biological role, the RecF protein is involved in DNA metabolism; it is required for DNA replication and normal SOS inducibility. RecF binds preferentially to single-stranded, linear DNA. It also seems to bind ATP. This chain is DNA replication and repair protein RecF, found in Chlamydia abortus (strain DSM 27085 / S26/3) (Chlamydophila abortus).